Here is a 245-residue protein sequence, read N- to C-terminus: Homeobox protein goosecoid (245 aa).

Positions 150–209 form a DNA-binding region, homeobox; it reads KRRHRTIFTDEQLEALENLFQETKYPDVGTREQLARKVHLREEKVEVWFKNRRAKWRRQK. The segment at 203 to 245 is disordered; that stretch reads AKWRRQKRSSSEESENAQKWNKASKTSPEKRQEDGKSDLDSDS. A compositionally biased stretch (polar residues) spans 219–228; the sequence is AQKWNKASKT. Basic and acidic residues predominate over residues 229–245; sequence SPEKRQEDGKSDLDSDS.

Belongs to the paired homeobox family. Bicoid subfamily.

Its subcellular location is the nucleus. Its function is as follows. Involved in the development of the organizer region in the gastrula (Hensen node in chicken). This Gallus gallus (Chicken) protein is Homeobox protein goosecoid (GSC).